The chain runs to 127 residues: S-adenosylmethionine decarboxylase proenzyme (127 aa).

Ser-63 serves as the catalytic Schiff-base intermediate with substrate; via pyruvic acid. A Pyruvic acid (Ser); by autocatalysis modification is found at Ser-63. His-68 serves as the catalytic Proton acceptor; for processing activity. The active-site Proton donor; for catalytic activity is the Cys-83.

This sequence belongs to the prokaryotic AdoMetDC family. Type 1 subfamily. As to quaternary structure, heterotetramer of two alpha and two beta chains arranged as a dimer of alpha/beta heterodimers. Pyruvate is required as a cofactor. In terms of processing, is synthesized initially as an inactive proenzyme. Formation of the active enzyme involves a self-maturation process in which the active site pyruvoyl group is generated from an internal serine residue via an autocatalytic post-translational modification. Two non-identical subunits are generated from the proenzyme in this reaction, and the pyruvate is formed at the N-terminus of the alpha chain, which is derived from the carboxyl end of the proenzyme. The post-translation cleavage follows an unusual pathway, termed non-hydrolytic serinolysis, in which the side chain hydroxyl group of the serine supplies its oxygen atom to form the C-terminus of the beta chain, while the remainder of the serine residue undergoes an oxidative deamination to produce ammonia and the pyruvoyl group blocking the N-terminus of the alpha chain.

It catalyses the reaction S-adenosyl-L-methionine + H(+) = S-adenosyl 3-(methylsulfanyl)propylamine + CO2. It participates in amine and polyamine biosynthesis; S-adenosylmethioninamine biosynthesis; S-adenosylmethioninamine from S-adenosyl-L-methionine: step 1/1. Its function is as follows. Catalyzes the decarboxylation of S-adenosylmethionine to S-adenosylmethioninamine (dcAdoMet), the propylamine donor required for the synthesis of the polyamines spermine and spermidine from the diamine putrescine. The sequence is that of S-adenosylmethionine decarboxylase proenzyme from Carboxydothermus hydrogenoformans (strain ATCC BAA-161 / DSM 6008 / Z-2901).